Here is a 234-residue protein sequence, read N- to C-terminus: Orotidine 5'-phosphate decarboxylase (234 aa).

Residues aspartate 11, lysine 33, 60–69, threonine 120, arginine 181, glutamine 190, glycine 210, and arginine 211 contribute to the substrate site; that span reads DLKFHDIPNT. Lysine 62 (proton donor) is an active-site residue.

It belongs to the OMP decarboxylase family. Type 1 subfamily. Homodimer.

It carries out the reaction orotidine 5'-phosphate + H(+) = UMP + CO2. Its pathway is pyrimidine metabolism; UMP biosynthesis via de novo pathway; UMP from orotate: step 2/2. Functionally, catalyzes the decarboxylation of orotidine 5'-monophosphate (OMP) to uridine 5'-monophosphate (UMP). In Aliivibrio fischeri (strain ATCC 700601 / ES114) (Vibrio fischeri), this protein is Orotidine 5'-phosphate decarboxylase.